We begin with the raw amino-acid sequence, 135 residues long: NADH-quinone oxidoreductase subunit K (135 aa).

3 helical membrane-spanning segments follow: residues 33–53 (VLGL…FAIG), 63–83 (FLFM…AFVV), and 95–115 (IMFI…LAIL).

It belongs to the complex I subunit 4L family. As to quaternary structure, NDH-1 is composed of 14 different subunits. Subunits NuoA, H, J, K, L, M, N constitute the membrane sector of the complex.

It is found in the cell inner membrane. It catalyses the reaction a quinone + NADH + 5 H(+)(in) = a quinol + NAD(+) + 4 H(+)(out). Functionally, NDH-1 shuttles electrons from NADH, via FMN and iron-sulfur (Fe-S) centers, to quinones in the respiratory chain. The immediate electron acceptor for the enzyme in this species is believed to be ubiquinone. Couples the redox reaction to proton translocation (for every two electrons transferred, four hydrogen ions are translocated across the cytoplasmic membrane), and thus conserves the redox energy in a proton gradient. The sequence is that of NADH-quinone oxidoreductase subunit K from Psychrobacter arcticus (strain DSM 17307 / VKM B-2377 / 273-4).